The sequence spans 479 residues: Leucine-rich repeat-containing protein 74A (479 aa).

Residues 1–10 show a composition bias toward acidic residues; the sequence is MDDDDIEPLE. A disordered region spans residues 1–29; the sequence is MDDDDIEPLEYETKDETEAALAPQSSEDT. LRR repeat units follow at residues 119–140, 147–167, 176–197, 204–225, 232–253, 260–281, 288–309, and 316–336; these read TVLKLELEDNSIQEEGILSLME, YLQELNVSDNNLGLEGARIIS, SLWKLKLSGNKFKEECALLLCQ, RIRSLNLSHNEFSDTAGEYLGQ, GLQSLNLSWNHFNVRGAVALCN, TLKKLDVSMNGFGNDGALALGD, CLVYVDVSRNGITNEGASRISK, and CLQVLKLFLNPVSLEGAYSLI.

This Rattus norvegicus (Rat) protein is Leucine-rich repeat-containing protein 74A.